The chain runs to 327 residues: 7,8-didemethyl-8-hydroxy-5-deazariboflavin synthase (327 aa).

The region spanning I6 to N244 is the Radical SAM core domain. Residues C20, C24, and C27 each contribute to the [4Fe-4S] cluster site.

Belongs to the radical SAM superfamily. CofG family. Consists of two subunits, CofG and CofH. Requires [4Fe-4S] cluster as cofactor.

It catalyses the reaction 5-amino-5-(4-hydroxybenzyl)-6-(D-ribitylimino)-5,6-dihydrouracil + S-adenosyl-L-methionine = 7,8-didemethyl-8-hydroxy-5-deazariboflavin + 5'-deoxyadenosine + L-methionine + NH4(+) + H(+). The protein operates within cofactor biosynthesis; coenzyme F0 biosynthesis. Functionally, catalyzes the radical-mediated synthesis of 7,8-didemethyl-8-hydroxy-5-deazariboflavin from 5-amino-5-(4-hydroxybenzyl)-6-(D-ribitylimino)-5,6-dihydrouracil. The sequence is that of 7,8-didemethyl-8-hydroxy-5-deazariboflavin synthase from Methanosphaerula palustris (strain ATCC BAA-1556 / DSM 19958 / E1-9c).